The following is a 129-amino-acid chain: RutC family protein PM1466 (129 aa).

Belongs to the RutC family.

This Pasteurella multocida (strain Pm70) protein is RutC family protein PM1466.